Here is a 415-residue protein sequence, read N- to C-terminus: Sphingomyelin synthase-related protein 1 (415 aa).

The 67-residue stretch at 12–78 folds into the SAM domain; sequence WTTKHVAVWL…MLSVRKLQKI (67 aa). Helical transmembrane passes span 153 to 173, 201 to 221, 232 to 252, and 277 to 297; these read ILSC…MVIV, FAMT…VLLL, LCSL…VTSL, and FAIW…GDYM. Residue His-301 is part of the active site. Residues 322–342 traverse the membrane as a helical segment; sequence FLHTLSWVLNLFGIFFILAAH. Catalysis depends on residues His-344 and Asp-348. The helical transmembrane segment at 347-367 threads the bilayer; sequence IDVFIAFYITTRLFLYYHTLA. Residues 368 to 415 are Cytoplasmic-facing; the sequence is NTRAYQQSRRARIWFPMFSFFECNVNGTVPNEYCWPFSKPAIMKRLIG.

The protein belongs to the sphingomyelin synthase family.

Its subcellular location is the endoplasmic reticulum membrane. The catalysed reaction is an N-acylsphing-4-enine + a 1,2-diacyl-sn-glycero-3-phosphoethanolamine = an N-acylsphing-4-enine 1-phosphoethanolamine + a 1,2-diacyl-sn-glycerol. It catalyses the reaction an N-acylsphinganine + a 1,2-diacyl-sn-glycero-3-phosphoethanolamine = an N-acylsphinganine-1-phosphoethanolamine + a 1,2-diacyl-sn-glycerol. It carries out the reaction an N-acyl-(4R)-4-hydroxysphinganine + a 1,2-diacyl-sn-glycero-3-phosphoethanolamine = an N-acyl-(4R)-4-hydroxysphinganine-1-phosphoethanolamine + a 1,2-diacyl-sn-glycerol. The enzyme catalyses N-hexadecanoylsphinganine + a 1,2-diacyl-sn-glycero-3-phosphoethanolamine = N-hexadecanoyl-sphinganine-1-phosphoethanolamine + a 1,2-diacyl-sn-glycerol. The catalysed reaction is N-hexadecanoyl-(4R)-hydroxysphinganine + a 1,2-diacyl-sn-glycero-3-phosphoethanolamine = N-hexadecanoyl-(4R)-hydroxysphinganine-1-phosphoethanolamine + a 1,2-diacyl-sn-glycerol. It participates in sphingolipid metabolism. In terms of biological role, synthesizes sphingolipids through transfer of a phosphatidyl head group from a glycerophospholipid on to the primary hydroxyl of a ceramide in the lumen of the endoplasmic reticulum. Catalyzes the synthesis of ceramide phosphoethanolamines (CPEs) (such as N-acylsphing-4-enine 1-phosphoethanolamine) by transferring phosphoethanolamine head group, which is smaller and more hydrophilic than the phosphocholine (PC) headgroup transferred in the canonical sphingomyelin synthesis (SMS) reaction by SMS1 or SMS2, from a phosphatidylethanolamine (1,2-diacyl-sn-glycero-3-phosphoethanolamine, PE) to a ceramide (such as N-acylsphing-4-enine). The larger PC prevents an efficient fit in the enzyme's catalytic pocket, leading to little or no SMS activity. In vitro, in the absence of ceramide, it has PLC activity with preference for phosphatidylinositol and phosphatidic acid, but also hydrolyzes phosphatidylethanolamine. This Homo sapiens (Human) protein is Sphingomyelin synthase-related protein 1.